We begin with the raw amino-acid sequence, 73 residues long: Protein BP4C (73 aa).

As to expression, pollen specific.

The polypeptide is Protein BP4C (BP4C) (Brassica napus (Rape)).